We begin with the raw amino-acid sequence, 510 residues long: 2,3-bisphosphoglycerate-independent phosphoglycerate mutase (510 aa).

The Mn(2+) site is built by D12 and S62. S62 functions as the Phosphoserine intermediate in the catalytic mechanism. Substrate contacts are provided by residues H123, 153–154 (RD), R185, R191, 260–263 (RPDR), and K335. Mn(2+) is bound by residues D402, H406, D443, H444, and H461.

It belongs to the BPG-independent phosphoglycerate mutase family. As to quaternary structure, monomer. Mn(2+) is required as a cofactor.

The catalysed reaction is (2R)-2-phosphoglycerate = (2R)-3-phosphoglycerate. The protein operates within carbohydrate degradation; glycolysis; pyruvate from D-glyceraldehyde 3-phosphate: step 3/5. Its function is as follows. Catalyzes the interconversion of 2-phosphoglycerate and 3-phosphoglycerate. In Listeria monocytogenes serovar 1/2a (strain ATCC BAA-679 / EGD-e), this protein is 2,3-bisphosphoglycerate-independent phosphoglycerate mutase.